The chain runs to 873 residues: Alanine--tRNA ligase (873 aa).

The Zn(2+) site is built by histidine 563, histidine 567, cysteine 665, and histidine 669.

The protein belongs to the class-II aminoacyl-tRNA synthetase family. Zn(2+) serves as cofactor.

It is found in the cytoplasm. It catalyses the reaction tRNA(Ala) + L-alanine + ATP = L-alanyl-tRNA(Ala) + AMP + diphosphate. Its function is as follows. Catalyzes the attachment of alanine to tRNA(Ala) in a two-step reaction: alanine is first activated by ATP to form Ala-AMP and then transferred to the acceptor end of tRNA(Ala). Also edits incorrectly charged Ser-tRNA(Ala) and Gly-tRNA(Ala) via its editing domain. The chain is Alanine--tRNA ligase from Parabacteroides distasonis (strain ATCC 8503 / DSM 20701 / CIP 104284 / JCM 5825 / NCTC 11152).